The following is a 386-amino-acid chain: Short-chain dehydrogenase/reductase family 42E member 1 (386 aa).

Tyr150 serves as the catalytic Proton acceptor. Lys154 provides a ligand contact to NAD(+). 2 helical membrane passes run 279 to 299 (FPLS…FFIS) and 363 to 383 (YLIW…SWLP).

This sequence belongs to the 3-beta-HSD family.

It is found in the membrane. The polypeptide is Short-chain dehydrogenase/reductase family 42E member 1 (sdr42e1) (Xenopus laevis (African clawed frog)).